The chain runs to 345 residues: ATP-dependent kinase YFH7 (345 aa).

31-39 (GPPGSGKST) lines the ATP pocket.

It belongs to the YFH7 family.

In terms of biological role, ATP-dependent kinase that could be involved in endoplasmic reticulum membrane assembly. In Candida glabrata (strain ATCC 2001 / BCRC 20586 / JCM 3761 / NBRC 0622 / NRRL Y-65 / CBS 138) (Yeast), this protein is ATP-dependent kinase YFH7 (YFH7).